The sequence spans 144 residues: Large ribosomal subunit protein uL15 (144 aa).

A disordered region spans residues 1-58; it reads MKLNTLSPAAGAKHAAKRVGRGIGSGLGKTAGRGHKGQKSRSGGSIRPGFEGGQMPLK. Over residues 21–31 the composition is skewed to gly residues; it reads RGIGSGLGKTA.

It belongs to the universal ribosomal protein uL15 family. Part of the 50S ribosomal subunit.

Binds to the 23S rRNA. The polypeptide is Large ribosomal subunit protein uL15 (Psychromonas ingrahamii (strain DSM 17664 / CCUG 51855 / 37)).